Reading from the N-terminus, the 270-residue chain is Undecaprenyl-diphosphatase 2 (270 aa).

8 consecutive transmembrane segments (helical) span residues 1–21 (MDLIQIIVLAIVQGLTEFLPV), 39–59 (QGLAFDVAVHLGTLAAVVWYF), 87–107 (WAVILGTIPAGIAGLLFKGFI), 114–134 (PLVIAWATIGFGLLLWWSDVV), 147–167 (LSWKDILLIGCAQALALIPGT), 190–210 (FSFLLSIPIIVLASGLSTLDL), 221–241 (AMGLGVVLSAISAYLCIHFFL), and 247–267 (VGMLPFVIYRLILGAVLLVLF).

Belongs to the UppP family.

It localises to the cell inner membrane. It catalyses the reaction di-trans,octa-cis-undecaprenyl diphosphate + H2O = di-trans,octa-cis-undecaprenyl phosphate + phosphate + H(+). In terms of biological role, catalyzes the dephosphorylation of undecaprenyl diphosphate (UPP). Confers resistance to bacitracin. The polypeptide is Undecaprenyl-diphosphatase 2 (Stutzerimonas stutzeri (strain A1501) (Pseudomonas stutzeri)).